A 71-amino-acid polypeptide reads, in one-letter code: Light-harvesting protein B-800/850 alpha chain (71 aa).

Residues 1–15 (MNQGKVWRVVKPTVG) lie on the Cytoplasmic side of the membrane. The chain crosses the membrane as a helical span at residues 16 to 36 (VPVYLGAVAVTALILHGGLLA). His-31 contacts a bacteriochlorophyll. The Periplasmic segment spans residues 37–50 (KTDWFGAYWNGGKK). A helical transmembrane segment spans residues 51 to 71 (AAAAAAAVAPAPVAAPQAPAQ).

This sequence belongs to the antenna complex alpha subunit family. In terms of assembly, an alpha/beta heterodimer conjugated to 3 bacteriochlorophyll molecules. The core complex is formed by different alpha and beta chains, binding bacteriochlorophyll molecules, and arranged most probably in tetrameric structures disposed around the reaction center. The non-pigmented gamma chains may constitute additional components.

The protein localises to the cell membrane. Functionally, antenna complexes are light-harvesting systems, which transfer the excitation energy to the reaction centers. This is Light-harvesting protein B-800/850 alpha chain (pucA) from Rubrivivax gelatinosus (Rhodocyclus gelatinosus).